The primary structure comprises 202 residues: NADH dehydrogenase [ubiquinone] iron-sulfur protein 7, mitochondrial (202 aa).

Residues 1–56 constitute a mitochondrion transit peptide; the sequence is MLRRTSFNFTGRAMISRGSPEWSHRLDLKKGKKTTMMHKLGTSKPNNALQYAQMTL. Residues Cys-77, Cys-78, Cys-142, and Cys-172 each contribute to the [4Fe-4S] cluster site.

Belongs to the complex I 20 kDa subunit family. As to quaternary structure, complex I is composed of 45 different subunits This is a component of the iron-sulfur (IP) fragment of the enzyme. Requires [4Fe-4S] cluster as cofactor.

The protein resides in the mitochondrion. It catalyses the reaction a ubiquinone + NADH + 5 H(+)(in) = a ubiquinol + NAD(+) + 4 H(+)(out). In terms of biological role, core subunit of the mitochondrial membrane respiratory chain NADH dehydrogenase (Complex I) that is believed to belong to the minimal assembly required for catalysis. Complex I functions in the transfer of electrons from NADH to the respiratory chain. The immediate electron acceptor for the enzyme is believed to be ubiquinone. The sequence is that of NADH dehydrogenase [ubiquinone] iron-sulfur protein 7, mitochondrial (NDHK) from Trypanosoma brucei brucei.